The sequence spans 291 residues: Small ribosomal subunit protein uS2 (291 aa).

The segment at 270–291 (NINEEANTEFEQALSDADEDKN) is disordered.

This sequence belongs to the universal ribosomal protein uS2 family.

This chain is Small ribosomal subunit protein uS2, found in Rickettsia bellii (strain OSU 85-389).